The following is a 249-amino-acid chain: Phosphomannomutase (249 aa).

D15 (nucleophile) is an active-site residue. The Mg(2+) site is built by D15 and D17. D17 acts as the Proton donor/acceptor in catalysis. Residues R24, R126, R137, R144, S182, and D184 each contribute to the alpha-D-mannose 1-phosphate site. 3 residues coordinate Mg(2+): D210, F222, and T227.

It belongs to the eukaryotic PMM family. In terms of assembly, homodimer. Mg(2+) is required as a cofactor. As to expression, expressed in roots, leaves, flag leaves and immature spikes.

It is found in the cytoplasm. The catalysed reaction is alpha-D-mannose 1-phosphate = D-mannose 6-phosphate. The protein operates within nucleotide-sugar biosynthesis; GDP-alpha-D-mannose biosynthesis; alpha-D-mannose 1-phosphate from D-fructose 6-phosphate: step 2/2. In terms of biological role, catalyzes the interconversion of mannose-6-phosphate to mannose-1-phosphate, the precursor for the synthesis of GDP-mannose. GDP-mannose is an essential sugar nucleotide for the synthesis of D-mannose-containing cell wall polysaccharides (galactomannans and glucomannans), glycolipids, glycoproteins and the antioxidant L-ascorbate. Can complement the yeast temperature-sensitive mutant sec53-6. The sequence is that of Phosphomannomutase from Triticum aestivum (Wheat).